The following is a 475-amino-acid chain: Exodeoxyribonuclease 7 large subunit (475 aa).

The protein belongs to the XseA family. In terms of assembly, heterooligomer composed of large and small subunits.

The protein localises to the cytoplasm. The enzyme catalyses Exonucleolytic cleavage in either 5'- to 3'- or 3'- to 5'-direction to yield nucleoside 5'-phosphates.. Its function is as follows. Bidirectionally degrades single-stranded DNA into large acid-insoluble oligonucleotides, which are then degraded further into small acid-soluble oligonucleotides. The sequence is that of Exodeoxyribonuclease 7 large subunit from Bartonella henselae (strain ATCC 49882 / DSM 28221 / CCUG 30454 / Houston 1) (Rochalimaea henselae).